Here is a 472-residue protein sequence, read N- to C-terminus: UDP-N-acetylmuramate--L-alanine ligase (472 aa).

118–124 (GTHGKTT) serves as a coordination point for ATP.

Belongs to the MurCDEF family.

The protein localises to the cytoplasm. It catalyses the reaction UDP-N-acetyl-alpha-D-muramate + L-alanine + ATP = UDP-N-acetyl-alpha-D-muramoyl-L-alanine + ADP + phosphate + H(+). It functions in the pathway cell wall biogenesis; peptidoglycan biosynthesis. Cell wall formation. This is UDP-N-acetylmuramate--L-alanine ligase from Methylococcus capsulatus (strain ATCC 33009 / NCIMB 11132 / Bath).